The chain runs to 105 residues: Small ribosomal subunit protein bS20 (105 aa).

The protein belongs to the bacterial ribosomal protein bS20 family.

Functionally, binds directly to 16S ribosomal RNA. This Moorella thermoacetica (strain ATCC 39073 / JCM 9320) protein is Small ribosomal subunit protein bS20.